We begin with the raw amino-acid sequence, 210 residues long: Superoxide dismutase [Mn], mitochondrial (210 aa).

Residues H29, H77, D164, and H168 each contribute to the Mn(2+) site.

It belongs to the iron/manganese superoxide dismutase family. Homotetramer. Mn(2+) serves as cofactor.

It is found in the mitochondrion matrix. The catalysed reaction is 2 superoxide + 2 H(+) = H2O2 + O2. Destroys superoxide anion radicals which are normally produced within the cells and which are toxic to biological systems. The protein is Superoxide dismutase [Mn], mitochondrial (sodB) of Aspergillus oryzae (strain ATCC 42149 / RIB 40) (Yellow koji mold).